A 387-amino-acid chain; its full sequence is 2-alkyl-3-oxoalkanoate reductase (387 aa).

Catalysis depends on Y190, which acts as the Proton acceptor. Position 194 (K194) interacts with NADP(+).

It belongs to the 3-beta-HSD family.

It catalyses the reaction a (2R,3S)-2-alkyl-3-hydroxyalkanoate + NADP(+) = an (R)-2-alkyl-3-oxoalkanoate + NADPH + H(+). In terms of biological role, involved in olefin biosynthesis. Catalyzes the reversible stereospecific NADPH-dependent reduction of 2-alkyl-3-oxoalkanoic acids to 2-alkyl-3-hydroxyalkanoic acids. The S.oneidensis oleABCD genes produce 3,6,9,12,15,19,22,25,28-hentriacontanonaene, which may aid the cells in adapting to a sudden drop in temperature. This is 2-alkyl-3-oxoalkanoate reductase from Shewanella oneidensis (strain ATCC 700550 / JCM 31522 / CIP 106686 / LMG 19005 / NCIMB 14063 / MR-1).